We begin with the raw amino-acid sequence, 236 residues long: Ubiquinone biosynthesis O-methyltransferase (236 aa).

Residues R40, G59, D80, and L124 each coordinate S-adenosyl-L-methionine.

Belongs to the methyltransferase superfamily. UbiG/COQ3 family.

It catalyses the reaction a 3-demethylubiquinol + S-adenosyl-L-methionine = a ubiquinol + S-adenosyl-L-homocysteine + H(+). The catalysed reaction is a 3-(all-trans-polyprenyl)benzene-1,2-diol + S-adenosyl-L-methionine = a 2-methoxy-6-(all-trans-polyprenyl)phenol + S-adenosyl-L-homocysteine + H(+). It participates in cofactor biosynthesis; ubiquinone biosynthesis. In terms of biological role, O-methyltransferase that catalyzes the 2 O-methylation steps in the ubiquinone biosynthetic pathway. The chain is Ubiquinone biosynthesis O-methyltransferase from Nitrosococcus oceani (strain ATCC 19707 / BCRC 17464 / JCM 30415 / NCIMB 11848 / C-107).